The following is a 148-amino-acid chain: UPF0260 protein ESA_01462 (148 aa).

The protein belongs to the UPF0260 family.

The protein is UPF0260 protein ESA_01462 of Cronobacter sakazakii (strain ATCC BAA-894) (Enterobacter sakazakii).